The sequence spans 396 residues: Stearoyl-[acyl-carrier-protein] 9-desaturase 5, chloroplastic (396 aa).

The transit peptide at 1–29 (MAMAMDRIVFSPSSYVYRPCQARGSRSSR) directs the protein to the chloroplast. Residues Glu137, Glu175, His178, Glu228, Glu261, and His264 each contribute to the Fe cation site.

This sequence belongs to the fatty acid desaturase type 2 family. Homodimer. The cofactor is Fe(2+). Ubiquitously expressed with a preference in leaves, flowers and stems.

Its subcellular location is the plastid. The protein localises to the chloroplast stroma. It catalyses the reaction octadecanoyl-[ACP] + 2 reduced [2Fe-2S]-[ferredoxin] + O2 + 2 H(+) = (9Z)-octadecenoyl-[ACP] + 2 oxidized [2Fe-2S]-[ferredoxin] + 2 H2O. The protein operates within lipid metabolism; fatty acid metabolism. Its function is as follows. Converts stearoyl-ACP to oleoyl-ACP by introduction of a cis double bond between carbons 9 and 10 of the acyl chain. This Arabidopsis thaliana (Mouse-ear cress) protein is Stearoyl-[acyl-carrier-protein] 9-desaturase 5, chloroplastic (S-ACP-DES5).